The sequence spans 950 residues: A disintegrin and metalloproteinase with thrombospondin motifs 15 (950 aa).

Residues 1–18 form the signal peptide; the sequence is MLLLGISILALAWRPAGS. The propeptide occupies 19-212; it reads SEPEWEVVVP…NRRRSGRAKR (194 aa). N-linked (GlcNAc...) asparagine glycosylation is present at asparagine 141. The interval 144–172 is disordered; that stretch reads APEAQRHSQGAHLLQRRGAPVGPSGDPTS. A Cysteine switch motif is present at residues 172-179; that stretch reads SRCGVASG. Cysteine 174 contacts Zn(2+). The Peptidase M12B domain occupies 218-427; the sequence is RYVETLVVAD…GHGDCLLDQP (210 aa). 11 disulfide bridges follow: cysteine 293-cysteine 345, cysteine 322-cysteine 327, cysteine 339-cysteine 422, cysteine 377-cysteine 406, cysteine 448-cysteine 470, cysteine 459-cysteine 480, cysteine 465-cysteine 499, cysteine 493-cysteine 504, cysteine 528-cysteine 565, cysteine 532-cysteine 570, and cysteine 543-cysteine 555. Position 361 (histidine 361) interacts with Zn(2+). Glutamate 362 is an active-site residue. Residues histidine 365 and histidine 371 each contribute to the Zn(2+) site. The Disintegrin domain maps to 428-515; that stretch reads SKPITLPEDL…ERHNPNKYRV (88 aa). The 56-residue stretch at 516–571 folds into the TSP type-1 1 domain; the sequence is DGSWAKWEPYGSCSRTCGGGVQLARRQCSNPTPANGGKYCEGVRVKYRSCNLEPCP. N-linked (GlcNAc...) asparagine glycans are attached at residues asparagine 591, asparagine 623, and asparagine 679. The tract at residues 701–838 is spacer; it reads AIPAGASSID…SNQVEQPDNR (138 aa). The interval 798 to 822 is disordered; it reads FYLPKEPREDKSTRPKDPRGSPVLR. The segment covering 802 to 816 has biased composition (basic and acidic residues); the sequence is KEPREDKSTRPKDPR. TSP type-1 domains are found at residues 839-895 and 896-949; these read PPAR…EPCP and TWEL…VLRP.

The cofactor is Zn(2+). In terms of processing, the precursor is cleaved by a furin endopeptidase. Glycosylated. Can be O-fucosylated by POFUT2 on a serine or a threonine residue found within the consensus sequence C1-X(2)-(S/T)-C2-G of the TSP type-1 repeat domains where C1 and C2 are the first and second cysteine residue of the repeat, respectively. Fucosylated repeats can then be further glycosylated by the addition of a beta-1,3-glucose residue by the glucosyltransferase, B3GALTL. Fucosylation mediates the efficient secretion of ADAMTS family members. Can be C-glycosylated with one or two mannose molecules on tryptophan residues within the consensus sequence W-X-X-W of the TPRs. Also N-glycosylated. These other glycosylations can also facilitate secretion. As to expression, in the adult colon, highly expressed in the muscularis externa (inner circular smooth muscle and outer longitudinal smooth muscle), muscularis mucosa, submucosal glands, crypt, villi epithelial cells, goblet cells and lamina propria. Expressed at perimuscular and peritendious areas in the developing limbs.

It is found in the secreted. Its subcellular location is the extracellular space. The protein localises to the extracellular matrix. It localises to the cell surface. Its function is as follows. Metalloprotease which has proteolytic activity against the proteoglycan VCAN, cleaving it at the 'Glu-1401-|-1402-Ala' site. Cleaves VCAN in the pericellular matrix surrounding myoblasts, facilitating myoblast contact and fusion which is required for skeletal muscle development and regeneration. The polypeptide is A disintegrin and metalloproteinase with thrombospondin motifs 15 (Adamts15) (Mus musculus (Mouse)).